The following is a 729-amino-acid chain: Phosphoribosylformylglycinamidine synthase subunit PurL (729 aa).

His42 is an active-site residue. Tyr45 and Lys84 together coordinate ATP. Residue Glu86 participates in Mg(2+) binding. Residues 87–90 and Arg109 each bind substrate; that span reads SHNH. His88 functions as the Proton acceptor in the catalytic mechanism. Asp110 is a binding site for Mg(2+). Gln238 lines the substrate pocket. Mg(2+) is bound at residue Asp266. 310-312 contacts substrate; sequence ESQ. ATP is bound by residues Asp492 and Gly529. Position 530 (Asn530) interacts with Mg(2+). Ser532 is a substrate binding site.

It belongs to the FGAMS family. As to quaternary structure, monomer. Part of the FGAM synthase complex composed of 1 PurL, 1 PurQ and 2 PurS subunits.

Its subcellular location is the cytoplasm. The enzyme catalyses N(2)-formyl-N(1)-(5-phospho-beta-D-ribosyl)glycinamide + L-glutamine + ATP + H2O = 2-formamido-N(1)-(5-O-phospho-beta-D-ribosyl)acetamidine + L-glutamate + ADP + phosphate + H(+). It participates in purine metabolism; IMP biosynthesis via de novo pathway; 5-amino-1-(5-phospho-D-ribosyl)imidazole from N(2)-formyl-N(1)-(5-phospho-D-ribosyl)glycinamide: step 1/2. Functionally, part of the phosphoribosylformylglycinamidine synthase complex involved in the purines biosynthetic pathway. Catalyzes the ATP-dependent conversion of formylglycinamide ribonucleotide (FGAR) and glutamine to yield formylglycinamidine ribonucleotide (FGAM) and glutamate. The FGAM synthase complex is composed of three subunits. PurQ produces an ammonia molecule by converting glutamine to glutamate. PurL transfers the ammonia molecule to FGAR to form FGAM in an ATP-dependent manner. PurS interacts with PurQ and PurL and is thought to assist in the transfer of the ammonia molecule from PurQ to PurL. The protein is Phosphoribosylformylglycinamidine synthase subunit PurL of Campylobacter curvus (strain 525.92).